Consider the following 214-residue polypeptide: Ribosomal RNA small subunit methyltransferase G (214 aa).

S-adenosyl-L-methionine-binding positions include G81, M86, 132 to 133, and R147; that span reads VE.

This sequence belongs to the methyltransferase superfamily. RNA methyltransferase RsmG family.

It localises to the cytoplasm. The catalysed reaction is guanosine(527) in 16S rRNA + S-adenosyl-L-methionine = N(7)-methylguanosine(527) in 16S rRNA + S-adenosyl-L-homocysteine. Specifically methylates the N7 position of guanine in position 527 of 16S rRNA. This Pseudomonas aeruginosa (strain UCBPP-PA14) protein is Ribosomal RNA small subunit methyltransferase G.